A 174-amino-acid chain; its full sequence is Ribosome maturation factor RimM (174 aa).

The region spanning K96–L169 is the PRC barrel domain.

This sequence belongs to the RimM family. Binds ribosomal protein uS19.

The protein resides in the cytoplasm. Its function is as follows. An accessory protein needed during the final step in the assembly of 30S ribosomal subunit, possibly for assembly of the head region. Essential for efficient processing of 16S rRNA. May be needed both before and after RbfA during the maturation of 16S rRNA. It has affinity for free ribosomal 30S subunits but not for 70S ribosomes. The chain is Ribosome maturation factor RimM from Acetivibrio thermocellus (strain ATCC 27405 / DSM 1237 / JCM 9322 / NBRC 103400 / NCIMB 10682 / NRRL B-4536 / VPI 7372) (Clostridium thermocellum).